Consider the following 457-residue polypeptide: L-lysine-epsilon aminotransferase (457 aa).

Positions 131 and 132 each coordinate pyridoxal 5'-phosphate. Residues R172 and Q278 each coordinate 2-oxoglutarate. R172 is an L-lysine binding site. Residue Q278 participates in pyridoxal 5'-phosphate binding. Position 304 is an N6-(pyridoxal phosphate)lysine (K304). R427 serves as a coordination point for 2-oxoglutarate.

The protein belongs to the class-III pyridoxal-phosphate-dependent aminotransferase family. In terms of assembly, monomer. Requires pyridoxal 5'-phosphate as cofactor.

It catalyses the reaction L-lysine + 2-oxoglutarate = (S)-2-amino-6-oxohexanoate + L-glutamate. Its pathway is antibiotic biosynthesis; cephamycin C biosynthesis. With respect to regulation, activity is induced in the presence of high concentrations of lysine, but not by L-alpha-aminoadipic acid. Not repressed by ammonium ions. Its function is as follows. Catalyzes the transfer of the terminal amino group of L-lysine to alpha-ketoglutarate to yield L-glutamate and 2-aminoadipate 6-semialdehyde ((S)-2-amino-6-oxohexanoate), which is spontaneously converted to the dehydrated form 1-piperideine 6-carboxylate. Shows a high specificity for L-lysine as substrate although L-ornithine can also be used, leading to the formation of an o-aminobenzaldehyde reactive compound. Only cis-oxaloacetate and pyruvate can replace alpha-ketoglutarate, but with very low efficiency. The protein is L-lysine-epsilon aminotransferase of Streptomyces clavuligerus.